The chain runs to 160 residues: Large ribosomal subunit protein uL15 (160 aa).

Residues 1-13 (MKLHELSDNDGAA) are compositionally biased toward basic and acidic residues. The interval 1–42 (MKLHELSDNDGAAKKRKRVGRGPGSGTGKMGGRGIKGQKSRS) is disordered. Positions 21-35 (RGPGSGTGKMGGRGI) are enriched in gly residues.

This sequence belongs to the universal ribosomal protein uL15 family. In terms of assembly, part of the 50S ribosomal subunit.

Its function is as follows. Binds to the 23S rRNA. The chain is Large ribosomal subunit protein uL15 from Roseobacter denitrificans (strain ATCC 33942 / OCh 114) (Erythrobacter sp. (strain OCh 114)).